The sequence spans 113 residues: Large ribosomal subunit protein bL19 (113 aa).

Belongs to the bacterial ribosomal protein bL19 family.

This protein is located at the 30S-50S ribosomal subunit interface and may play a role in the structure and function of the aminoacyl-tRNA binding site. In Desulfitobacterium hafniense (strain DSM 10664 / DCB-2), this protein is Large ribosomal subunit protein bL19.